The primary structure comprises 396 residues: 8-amino-7-oxononanoate synthase (396 aa).

Residue Arg-21 coordinates substrate. 108-109 serves as a coordination point for pyridoxal 5'-phosphate; that stretch reads GY. Position 133 (His-133) interacts with substrate. Ser-179, His-207, and Thr-236 together coordinate pyridoxal 5'-phosphate. Lys-239 bears the N6-(pyridoxal phosphate)lysine mark. Thr-353 provides a ligand contact to substrate.

Belongs to the class-II pyridoxal-phosphate-dependent aminotransferase family. BioF subfamily. In terms of assembly, homodimer. Pyridoxal 5'-phosphate is required as a cofactor.

The catalysed reaction is 6-carboxyhexanoyl-[ACP] + L-alanine + H(+) = (8S)-8-amino-7-oxononanoate + holo-[ACP] + CO2. Its pathway is cofactor biosynthesis; biotin biosynthesis. Functionally, catalyzes the decarboxylative condensation of pimeloyl-[acyl-carrier protein] and L-alanine to produce 8-amino-7-oxononanoate (AON), [acyl-carrier protein], and carbon dioxide. The chain is 8-amino-7-oxononanoate synthase from Hahella chejuensis (strain KCTC 2396).